A 208-amino-acid chain; its full sequence is Interferon epsilon (208 aa).

The first 21 residues, 1 to 21 (MIIKHFFGTVLVLLASTTIFS), serve as a signal peptide directing secretion. An intrachain disulfide couples C53 to C163. N-linked (GlcNAc...) asparagine glycosylation is found at N95 and N104.

The protein belongs to the alpha/beta interferon family. Endometrium-specific.

It is found in the secreted. Type I interferon required for maintaining basal levels of IFN-regulated genes, including 2'-5'-oligoadenylate synthetase, IRF7 and ISG15, in the female reproductive tract. Directly mediates protection against viral and bacterial genital infections. This is Interferon epsilon (IFNE) from Homo sapiens (Human).